Here is a 298-residue protein sequence, read N- to C-terminus: Quinolinate synthase (298 aa).

Positions 19 and 36 each coordinate iminosuccinate. Position 81 (cysteine 81) interacts with [4Fe-4S] cluster. Residues 107–109 (YVN) and serine 124 each bind iminosuccinate. Cysteine 168 contacts [4Fe-4S] cluster. Residues 193–195 (HPE) and threonine 210 contribute to the iminosuccinate site. Cysteine 254 provides a ligand contact to [4Fe-4S] cluster.

It belongs to the quinolinate synthase family. Type 2 subfamily. [4Fe-4S] cluster is required as a cofactor.

It localises to the cytoplasm. It carries out the reaction iminosuccinate + dihydroxyacetone phosphate = quinolinate + phosphate + 2 H2O + H(+). The protein operates within cofactor biosynthesis; NAD(+) biosynthesis; quinolinate from iminoaspartate: step 1/1. Functionally, catalyzes the condensation of iminoaspartate with dihydroxyacetone phosphate to form quinolinate. The sequence is that of Quinolinate synthase from Thermotoga petrophila (strain ATCC BAA-488 / DSM 13995 / JCM 10881 / RKU-1).